Reading from the N-terminus, the 339-residue chain is Heat-inducible transcription repressor HrcA (339 aa).

Belongs to the HrcA family.

In terms of biological role, negative regulator of class I heat shock genes (grpE-dnaK-dnaJ and groELS operons). Prevents heat-shock induction of these operons. The sequence is that of Heat-inducible transcription repressor HrcA from Nitrosospira multiformis (strain ATCC 25196 / NCIMB 11849 / C 71).